Consider the following 1032-residue polypeptide: Chitin synthase 8 (1032 aa).

Pro residues-rich tracts occupy residues 1–11 (MRPGDIYPPPQ) and 26–41 (PPQPQPYPPQPYPPQQ). A disordered region spans residues 1–220 (MRPGDIYPPP…DDDMNDSHPL (220 aa)). Composition is skewed to polar residues over residues 65–78 (MSPTPQEPQGSRYN), 98–107 (LPTQSLSPFN), and 143–160 (TNPSHLPPQQQLTPSYSY). N-linked (GlcNAc...) asparagine glycosylation is present at asparagine 78. The segment covering 176 to 188 (PHHSSQSSVSSIP) has biased composition (low complexity). N-linked (GlcNAc...) asparagine glycans are attached at residues asparagine 215, asparagine 304, asparagine 473, asparagine 545, and asparagine 691. The next 7 helical transmembrane spans lie at 728–748 (TLNMVFAWFALGNYYIAFFVL), 762–782 (VNIPLHYIYIALLLWCFLLSL), 796–816 (SMVGFALITIYMLFAAIFLAV), 842–862 (IVISLLATYGLYIISSLMALE), 870–890 (FFQYLLIAPSYINVLNVYAFC), 972–992 (VLLVWTMTNGALVAVILQASG), and 995–1015 (NSLATTYMGVLLYTVAGLAFF).

Belongs to the chitin synthase family.

It localises to the cell membrane. It catalyses the reaction [(1-&gt;4)-N-acetyl-beta-D-glucosaminyl](n) + UDP-N-acetyl-alpha-D-glucosamine = [(1-&gt;4)-N-acetyl-beta-D-glucosaminyl](n+1) + UDP + H(+). Its function is as follows. Polymerizes chitin, a structural polymer of the cell wall and septum, by transferring the sugar moiety of UDP-GlcNAc to the non-reducing end of the growing chitin polymer. The protein is Chitin synthase 8 of Cryptococcus neoformans var. grubii serotype A (strain H99 / ATCC 208821 / CBS 10515 / FGSC 9487) (Filobasidiella neoformans var. grubii).